The sequence spans 213 residues: Receptor-binding cancer antigen expressed on SiSo cells (213 aa).

Residues 1-6 lie on the Extracellular side of the membrane; that stretch reads MAITQF. Residues 7 to 27 traverse the membrane as a helical; Signal-anchor for type III membrane protein segment; it reads RLFKVCTCLATVLSFLKRLIC. The Cytoplasmic segment spans residues 28 to 213; it reads RSGRGRKLSG…EQNKMGVKLS (186 aa). Ser36 is modified (phosphoserine). Thr41 is subject to Phosphothreonine. Tyr94 is subject to Phosphotyrosine. Residues 168–209 are a coiled coil; sequence QAEEVLRQQKIADREKRAAEQQRKKMEKEAQRLLKKEQNKMG. Residues 179–206 show a composition bias toward basic and acidic residues; that stretch reads ADREKRAAEQQRKKMEKEAQRLLKKEQN. The disordered stretch occupies residues 179–213; sequence ADREKRAAEQQRKKMEKEAQRLLKKEQNKMGVKLS.

Homodimer.

It localises to the golgi apparatus membrane. In terms of biological role, may participate in suppression of cell proliferation and induces apoptotic cell death through activation of interleukin-1-beta converting enzyme (ICE)-like proteases. This Rattus norvegicus (Rat) protein is Receptor-binding cancer antigen expressed on SiSo cells (Ebag9).